The chain runs to 250 residues: 1-(5-phosphoribosyl)-5-[(5-phosphoribosylamino)methylideneamino] imidazole-4-carboxamide isomerase (250 aa).

The Proton acceptor role is filled by Asp8. Asp129 functions as the Proton donor in the catalytic mechanism.

The protein belongs to the HisA/HisF family.

Its subcellular location is the cytoplasm. It catalyses the reaction 1-(5-phospho-beta-D-ribosyl)-5-[(5-phospho-beta-D-ribosylamino)methylideneamino]imidazole-4-carboxamide = 5-[(5-phospho-1-deoxy-D-ribulos-1-ylimino)methylamino]-1-(5-phospho-beta-D-ribosyl)imidazole-4-carboxamide. It functions in the pathway amino-acid biosynthesis; L-histidine biosynthesis; L-histidine from 5-phospho-alpha-D-ribose 1-diphosphate: step 4/9. The chain is 1-(5-phosphoribosyl)-5-[(5-phosphoribosylamino)methylideneamino] imidazole-4-carboxamide isomerase from Desulfatibacillum aliphaticivorans.